The following is a 154-amino-acid chain: Methylglyoxal synthase (154 aa).

The MGS-like domain maps to 6 to 154 (QSLPAKKNIA…KYLATRQIDI (149 aa)). Residues H19, K23, 45–48 (TGTT), and 65–66 (SG) contribute to the substrate site. D71 acts as the Proton donor/acceptor in catalysis. Residue H98 coordinates substrate.

The protein belongs to the methylglyoxal synthase family.

The enzyme catalyses dihydroxyacetone phosphate = methylglyoxal + phosphate. Functionally, catalyzes the formation of methylglyoxal from dihydroxyacetone phosphate. This chain is Methylglyoxal synthase, found in Pseudoalteromonas translucida (strain TAC 125).